A 208-amino-acid chain; its full sequence is Protein-L-isoaspartate O-methyltransferase (208 aa).

The active site involves Ser-59.

The protein belongs to the methyltransferase superfamily. L-isoaspartyl/D-aspartyl protein methyltransferase family.

Its subcellular location is the cytoplasm. The enzyme catalyses [protein]-L-isoaspartate + S-adenosyl-L-methionine = [protein]-L-isoaspartate alpha-methyl ester + S-adenosyl-L-homocysteine. Functionally, catalyzes the methyl esterification of L-isoaspartyl residues in peptides and proteins that result from spontaneous decomposition of normal L-aspartyl and L-asparaginyl residues. It plays a role in the repair and/or degradation of damaged proteins. The polypeptide is Protein-L-isoaspartate O-methyltransferase (Klebsiella pneumoniae subsp. pneumoniae (strain ATCC 700721 / MGH 78578)).